Reading from the N-terminus, the 511-residue chain is Maturase K (511 aa).

The protein belongs to the intron maturase 2 family. MatK subfamily.

It is found in the plastid. The protein localises to the chloroplast. Functionally, usually encoded in the trnK tRNA gene intron. Probably assists in splicing its own and other chloroplast group II introns. The chain is Maturase K from Pistia stratiotes (Water lettuce).